The sequence spans 70 residues: Alpha-toxin Bot9 (70 aa).

The 64-residue stretch at 6–69 folds into the LCN-type CS-alpha/beta domain; the sequence is RDGYIVYPNN…PIKDPSYKCY (64 aa). Intrachain disulfides connect cysteine 16–cysteine 68, cysteine 20–cysteine 40, cysteine 26–cysteine 50, and cysteine 30–cysteine 52.

Belongs to the long (4 C-C) scorpion toxin superfamily. Sodium channel inhibitor family. Alpha subfamily. Expressed by the venom gland.

Its subcellular location is the secreted. Its function is as follows. Alpha toxins bind voltage-independently at site-3 of sodium channels (Nav) and inhibit the inactivation of the activated channels, thereby blocking neuronal transmission. This toxin is active against rat Nav1.2/SCN2A and B.germanica Nav1. In Buthus occitanus tunetanus (Common European scorpion), this protein is Alpha-toxin Bot9.